Here is a 75-residue protein sequence, read N- to C-terminus: Transcription attenuation protein MtrB (75 aa).

It belongs to the MtrB family. As to quaternary structure, oligomer of 11 identical subunits arranged in doughnut-like structure.

Required for transcription attenuation control in the Trp operon. This trans-acting factor seems to recognize a 10 bases nucleotide sequence in the Trp leader transcript causing transcription termination. Binds the leader RNA only in presence of L-tryptophan. This Bacillus velezensis (strain DSM 23117 / BGSC 10A6 / LMG 26770 / FZB42) (Bacillus amyloliquefaciens subsp. plantarum) protein is Transcription attenuation protein MtrB.